Consider the following 100-residue polypeptide: Envelope glycoprotein N (100 aa).

The first 27 residues, 1–27 (MLSTRFVTLAILACLLVVLGLARGAGG), serve as a signal peptide directing secretion. Over 28–63 (DPGVKQRIDVAREEERRDFWHAACSGHGFPITTPST) the chain is Virion surface. Residues 64-84 (AAILFYVSLLAVGVAVACQAY) form a helical membrane-spanning segment. Over 85–100 (RAVLRIVTLEMLQHLH) the chain is Intravirion.

The protein belongs to the herpesviridae glycoprotein N family. Interacts (via N-terminus) with gM (via N-terminus). The gM-gN heterodimer forms the gCII complex.

It is found in the virion membrane. The protein resides in the host membrane. Its subcellular location is the host Golgi apparatus. It localises to the host trans-Golgi network. Functionally, envelope glycoprotein necessary for proper maturation of gM and modulation of its membrane fusion activity. Also plays a critical role in virion morphogenesis. In Equus caballus (Horse), this protein is Envelope glycoprotein N.